The chain runs to 203 residues: Large ribosomal subunit protein bL25 (203 aa).

Belongs to the bacterial ribosomal protein bL25 family. CTC subfamily. In terms of assembly, part of the 50S ribosomal subunit; part of the 5S rRNA/L5/L18/L25 subcomplex. Contacts the 5S rRNA. Binds to the 5S rRNA independently of L5 and L18.

Its function is as follows. This is one of the proteins that binds to the 5S RNA in the ribosome where it forms part of the central protuberance. This Cellvibrio japonicus (strain Ueda107) (Pseudomonas fluorescens subsp. cellulosa) protein is Large ribosomal subunit protein bL25.